A 246-amino-acid chain; its full sequence is MyoD family inhibitor domain-containing protein (246 aa).

The segment at 1 to 71 (MSGAGEALAP…WGNPSDGELI (71 aa)) is disordered. Positions 33–43 (KCDKDNTEKDI) are enriched in basic and acidic residues. The span at 44–63 (TQATNSHFTHGEMQDQSIWG) shows a compositional bias: polar residues. One can recognise an MDFI domain in the interval 74–246 (QPQRLPQLQT…MECCGICFPS (173 aa)). 3 positions are modified to phosphoserine: S128, S140, and S143.

It belongs to the MDFI family. Interacts with HAND1; the interaction sequesters HAND1 into the nucleolus and inhibits its activity. Interacts (via C-terminus) with ZIC2. Interacts (via C-terminus) with AXIN1, the histidine-rich region of CCNT1/cyclin-T and weakly with LEF1. Interacts with CCNT2. Interacts with GATA2. Interacts (via C-terminus) with Piezo channel composed of PIEZO1 or PIEZO2; the interaction prolongs Piezo channel inactivation. In terms of assembly, (Microbial infection) Interacts (via C-terminus) with HIV-1 Tat and Rev. Post-translationally, palmitoylated. As to expression, expressed in lymphatic tissues. Detected in the spleen, thymus, peripheral blood leukocytes as well as prostate, uterus and small intestine. Expressed in lymphatic endothelial cells.

The protein resides in the nucleus. It is found in the nucleolus. Its subcellular location is the cytoplasm. It localises to the secreted. Required to control the activity of various transcription factors through their sequestration in the cytoplasm. Retains nuclear Zic proteins ZIC1, ZIC2 and ZIC3 in the cytoplasm and inhibits their transcriptional activation. Modulates the expression from cellular promoters. Binds to the axin complex, resulting in an increase in the level of free beta-catenin. Affects axin regulation of the WNT and JNK signaling pathways. Involved in the development of lymphatic vessel valves. Required to promote lymphatic endothelial cell migration, in a process that involves down-regulation of integrin beta 1 activation and control of cell adhesion to the extracellular matrix. Regulates the activity of mechanosensitive Piezo channel. In terms of biological role, (Microbial infection) Modulates the expression from viral promoters. Down-regulates Tat-dependent transcription of the human immunodeficiency virus type 1 (HIV-1) LTR by interacting with HIV-1 Tat and Rev and impairing their nuclear import, probably by rendering the NLS domains inaccessible to importin-beta. Also stimulates activation of human T-cell leukemia virus type I (HTLV-I) LTR. This is MyoD family inhibitor domain-containing protein from Homo sapiens (Human).